We begin with the raw amino-acid sequence, 694 residues long: Transcriptional activator HAA1 (694 aa).

Residues methionine 1 to serine 40 constitute a DNA-binding region (copper-fist). Zn(2+) is bound by residues cysteine 11, cysteine 14, cysteine 23, and histidine 25. 2 disordered regions span residues glutamine 104–methionine 128 and phenylalanine 209–valine 240. Polar residues predominate over residues serine 111–glutamine 126. Serine 125, serine 231, serine 241, and serine 291 each carry phosphoserine. Disordered regions lie at residues phenylalanine 332–phenylalanine 388, glutamate 479–proline 514, serine 566–aspartate 588, and methionine 650–glutamine 677. The span at aspartate 336 to threonine 349 shows a compositional bias: polar residues. Residues asparagine 350–serine 378 show a composition bias toward low complexity. 2 stretches are compositionally biased toward polar residues: residues serine 566 to serine 577 and serine 664 to glutamine 677.

The protein resides in the nucleus. Its function is as follows. Regulates the transcription of a set of genes, many of which encode membrane proteins. Among the genes regulated are YGR138C and YRO2. Does not seem to be dependent on copper. The chain is Transcriptional activator HAA1 (HAA1) from Saccharomyces cerevisiae (strain ATCC 204508 / S288c) (Baker's yeast).